Consider the following 649-residue polypeptide: Glycerol-3-phosphate dehydrogenase, mitochondrial (649 aa).

Position 69 to 97 (69 to 97) interacts with FAD; that stretch reads DVLIIGGGATGTGVAVDASTRGLNVCLLE.

This sequence belongs to the FAD-dependent glycerol-3-phosphate dehydrogenase family. FAD is required as a cofactor.

It is found in the mitochondrion. The catalysed reaction is a quinone + sn-glycerol 3-phosphate = dihydroxyacetone phosphate + a quinol. It functions in the pathway polyol metabolism; glycerol degradation via glycerol kinase pathway; glycerone phosphate from sn-glycerol 3-phosphate (anaerobic route): step 1/1. In Schizosaccharomyces pombe (strain 972 / ATCC 24843) (Fission yeast), this protein is Glycerol-3-phosphate dehydrogenase, mitochondrial (gut2).